We begin with the raw amino-acid sequence, 113 residues long: Protein INCREASED RESISTANCE TO MYZUS PERSICAE 1 (113 aa).

The FLZ-type zinc finger occupies 56 to 100 (DFLKTCSLCNRSLCHHRDIYMYRGNNAFCSLECREKQIKLDEKKA).

The protein belongs to the FLZ family. Interacts with KIN10 and KIN11 via its FLZ-type zinc finger domain. Interacts with KINB3 via its N-terminal part. Interacts with GEBP.

The protein resides in the nucleus. It is found in the cytoplasm. In terms of biological role, may act as an adapter to facilitate the interaction of SnRK1 complex with effector proteins, conferring tissue- and stimulus-type specific differences in the SnRK1 regulation pathway. This chain is Protein INCREASED RESISTANCE TO MYZUS PERSICAE 1, found in Arabidopsis thaliana (Mouse-ear cress).